We begin with the raw amino-acid sequence, 161 residues long: Troponin C, slow skeletal and cardiac muscles (161 aa).

The residue at position 1 (Met1) is an N-acetylmethionine. 4 EF-hand domains span residues 16–51 (QKNE…LGQN), 52–87 (PTPE…CMKD), 92–127 (KSEE…TGET), and 128–161 (ITED…KGVE). 5 residues coordinate Ca(2+): Asp65, Asp67, Ser69, Thr71, and Glu76. Residue Ser98 is modified to Phosphoserine. Ca(2+)-binding residues include Asp105, Asn107, Asp109, Tyr111, Glu116, Asp141, Asn143, Asp145, Arg147, and Glu152.

This sequence belongs to the troponin C family.

In terms of biological role, troponin is the central regulatory protein of striated muscle contraction. Tn consists of three components: Tn-I which is the inhibitor of actomyosin ATPase, Tn-T which contains the binding site for tropomyosin and Tn-C. The binding of calcium to Tn-C abolishes the inhibitory action of Tn on actin filaments. In Mus musculus (Mouse), this protein is Troponin C, slow skeletal and cardiac muscles (Tnnc1).